A 613-amino-acid polypeptide reads, in one-letter code: Probable hydrolase clz13 (613 aa).

The first 25 residues, 1-25, serve as a signal peptide directing secretion; sequence MCLLSMRFTVAILLVLLSHCGGSHA. N-linked (GlcNAc...) asparagine glycosylation is found at asparagine 61, asparagine 89, asparagine 286, asparagine 422, asparagine 456, asparagine 477, and asparagine 581.

It belongs to the beta-lactamase family.

It participates in secondary metabolite biosynthesis. Functionally, probable hydrolase; part of the gene cluster that mediates the biosynthesis of squalestatin S1 (SQS1, also known as zaragozic acid A), a heavily oxidized fungal polyketide that offers potent cholesterol lowering activity by targeting squalene synthase (SS). SQS1 is composed of a 2,8-dioxobicyclic[3.2.1]octane-3,4,5-tricarboxyclic acid core that is connected to two lipophilic polyketide arms. These initial steps feature the priming of an unusual benzoic acid starter unit onto the highly reducing polyketide synthase clz14, followed by oxaloacetate extension and product release to generate a tricarboxylic acid containing product. The phenylalanine ammonia lyase (PAL) clz10 and the acyl-CoA ligase clz12 are involved in transforming phenylalanine into benzoyl-CoA. The citrate synthase-like protein clz17 is involved in connecting the C-alpha-carbons of the hexaketide chain and oxaloacetate to afford the tricarboxylic acid unit. The potential hydrolytic enzymes, clz11 and clz13, are in close proximity to pks2 and may participate in product release. On the other side, the tetraketide arm is synthesized by a the squalestatin tetraketide synthase clz2 and enzymatically esterified to the core in the last biosynthetic step, by the acetyltransferase clz6. The biosynthesis of the tetraketide must involve 3 rounds of chain extension. After the first and second rounds methyl-transfer occurs, and in all rounds of extension the ketoreductase and dehydratase are active. The enoyl reductase and C-MeT of clz2 are not active in the final round of extension. The acetyltransferase clz6 appears to have a broad substrate selectivity for its acyl CoA substrate, allowing the in vitro synthesis of novel squalestatins. The biosynthesis of SQS1 requires several oxidative steps likely performed by oxidoreductases clz3, clz15 and clz16. Finally, in support of the identification of the cluster as being responsible for SQS1 production, the cluster contains a gene encoding a putative squalene synthase (SS) clz20, suggesting a likely mechanism for self-resistance. This chain is Probable hydrolase clz13, found in Cochliobolus lunatus (Filamentous fungus).